A 457-amino-acid chain; its full sequence is UPF0328 protein ECU05_0030 (457 aa).

2 disordered regions span residues 1-112 and 157-183; these read MPRP…PTAT and VKSQ…NPRI. The segment covering 74–94 has biased composition (basic and acidic residues); sequence HTEGCHTHEANPEPNTKHTET. The span at 102–112 shows a compositional bias: pro residues; it reads CPPPHPGPTAT.

The protein belongs to the UPF0328 family.

The sequence is that of UPF0328 protein ECU05_0030 from Encephalitozoon cuniculi (strain GB-M1) (Microsporidian parasite).